Reading from the N-terminus, the 129-residue chain is Small ribosomal subunit protein uS11 (129 aa).

The protein belongs to the universal ribosomal protein uS11 family. Part of the 30S ribosomal subunit. Interacts with proteins S7 and S18. Binds to IF-3.

In terms of biological role, located on the platform of the 30S subunit, it bridges several disparate RNA helices of the 16S rRNA. Forms part of the Shine-Dalgarno cleft in the 70S ribosome. This is Small ribosomal subunit protein uS11 from Lysinibacillus sphaericus (strain C3-41).